Consider the following 527-residue polypeptide: Peptide chain release factor 3 (527 aa).

The 269-residue stretch at alanine 9 to leucine 277 folds into the tr-type G domain. GTP is bound by residues serine 18–threonine 25, aspartate 86–histidine 90, and asparagine 140–aspartate 143.

This sequence belongs to the TRAFAC class translation factor GTPase superfamily. Classic translation factor GTPase family. PrfC subfamily.

The protein localises to the cytoplasm. Its function is as follows. Increases the formation of ribosomal termination complexes and stimulates activities of RF-1 and RF-2. It binds guanine nucleotides and has strong preference for UGA stop codons. It may interact directly with the ribosome. The stimulation of RF-1 and RF-2 is significantly reduced by GTP and GDP, but not by GMP. The polypeptide is Peptide chain release factor 3 (Pseudomonas fluorescens (strain SBW25)).